A 339-amino-acid chain; its full sequence is MIAVPEIRIMDTTLRDGMHAMAHQFTPEQMAQVAAALDEAGVDVIEVTHGDGLAGSSFQYGFAAATDEEYLEAVAPVLKKAKLAALILPGIGTCRDMRMAVQAGVKVFRIATHVTEADISEEHMGLAKEMGAEVVGFLMMSHTVGKEKIAEQAKLMESYGADVVYMVDSAGAMIPPEVTEKIGYLKEVLNIPVGFHAHNNLGLAVGNTLAAVAAGATAVDGTLRGLGAGAGNTSTEVLVAALKKAGYQVGVDLYKIMDAATVLEPMMRRPQVIDNASIILGYAGVYSSFLLHTYRAAERFGLDPRDILMELGRRKVVGGQEDYIVDVAYEMSRNKSRAV.

The Pyruvate carboxyltransferase domain maps to 7-257 (IRIMDTTLRD…QVGVDLYKIM (251 aa)). A substrate-binding site is contributed by 15-16 (RD). Asp-16 is a binding site for Mn(2+). His-19 (proton acceptor) is an active-site residue. Substrate is bound by residues Ser-169 and His-196. 2 residues coordinate Mn(2+): His-196 and His-198. Tyr-286 is a substrate binding site.

Belongs to the 4-hydroxy-2-oxovalerate aldolase family.

The catalysed reaction is (S)-4-hydroxy-2-oxopentanoate = acetaldehyde + pyruvate. The chain is 4-hydroxy-2-oxovalerate aldolase from Pelotomaculum thermopropionicum (strain DSM 13744 / JCM 10971 / SI).